We begin with the raw amino-acid sequence, 601 residues long: Invasin CotH3 (601 aa).

A signal peptide spans 1 to 17; sequence MKLSIISAAFLVAITHA. Asn-28, Asn-85, Asn-170, Asn-324, Asn-449, Asn-527, Asn-541, Asn-554, Asn-561, and Asn-571 each carry an N-linked (GlcNAc...) asparagine glycan. Positions 539–579 are enriched in low complexity; that stretch reads SANGTTAAAPAPAAGNSTGKGGNQSISSSASSNKTSAQSTS. The interval 539 to 581 is disordered; it reads SANGTTAAAPAPAAGNSTGKGGNQSISSSASSNKTSAQSTSGA. Ser-579 carries GPI-anchor amidated serine lipidation. Residues 580-601 constitute a propeptide, removed in mature form; that stretch reads GASRSKTAPIVLAISALALLVF.

As to quaternary structure, interacts with HSPA5/BiP on the cell surface of host nasal epithelial cells.

Its subcellular location is the cell membrane. Promotes invasion of host epithelial cells by adhering to receptors on the host cell surface to facilitate endocytosis of the pathogen into host cells. Binds HSPA5/BiP protein on the cell surface of host nasal epithelial cells. The chain is Invasin CotH3 from Rhizopus delemar (strain RA 99-880 / ATCC MYA-4621 / FGSC 9543 / NRRL 43880) (Mucormycosis agent).